The chain runs to 208 residues: Redox-sensing transcriptional repressor Rex (208 aa).

The H-T-H motif DNA-binding region spans 16–55 (VYSRYLENLYRKGITTVSSADIAQGVGVTSAQVRKDLAYF). 90–95 (GAGNLG) contacts NAD(+).

It belongs to the transcriptional regulatory Rex family. As to quaternary structure, homodimer.

Its subcellular location is the cytoplasm. Its function is as follows. Modulates transcription in response to changes in cellular NADH/NAD(+) redox state. This is Redox-sensing transcriptional repressor Rex from Carboxydothermus hydrogenoformans (strain ATCC BAA-161 / DSM 6008 / Z-2901).